Consider the following 483-residue polypeptide: Iroquois-class homeodomain protein IRX-5 (483 aa).

The homeobox; TALE-type DNA-binding region spans 113 to 175 (DPAYRKNATR…NARRRLKKEN (63 aa)). 2 disordered regions span residues 177–392 (MTWT…QCPF) and 423–442 (GHPGPGPGPTTGPGSHFNGL). The segment covering 186–203 (EDEEEEENIDLEKNDEDE) has biased composition (acidic residues). Basic and acidic residues-rich tracts occupy residues 204–213 (PQKPEDKGDP) and 250–261 (SDFKEPPSEGRL). Low complexity-rich tracts occupy residues 266-282 (GPPRTGGPSPAGPAAAR) and 374-388 (SRASPAPAPSRSPSA). Phosphoserine is present on Ser274. At Ser464 the chain carries Phosphoserine.

The protein belongs to the TALE/IRO homeobox family.

Its subcellular location is the nucleus. Its function is as follows. Establishes the cardiac repolarization gradient by its repressive actions on the KCND2 potassium-channel gene. Required for retinal cone bipolar cell differentiation. May regulate contrast adaptation in the retina and control specific aspects of visual function in circuits of the mammalian retina. Could be involved in the regulation of both the cell cycle and apoptosis in prostate cancer cells. Involved in craniofacial and gonadal development. Modulates the migration of progenitor cell populations in branchial arches and gonads by repressing CXCL12. The chain is Iroquois-class homeodomain protein IRX-5 (IRX5) from Homo sapiens (Human).